The following is a 312-amino-acid chain: MQSQPDNVAYPMELQAVNKDGTVEVRVQGNVDNSSNERWDADVQKHEVAEAQEKPVGGINFWAPRELRLNYRDYVAEFLGNFVLIYIAKGAVITSLLVPDFGLLGLTIGIGVAVTMALYVSLGISGGHLNSAVTVGNAVFGDFPWRKVPGYIAAQMLGTFLGAACAYGVFADLLKAHGGGELIAFGEKGIAWVFAMYPAEGNGIFYPIFAELISTAVLLLCVCGIFDPNNSPAKGYETVAIGALVFVMVNNFGLASPLAMNPSLDFGPRVFGAILLGGEVFSHANYYFWVPLVVPFFGAILGLFLYKYFLPH.

6 helical membrane passes run 78 to 98 (FLGN…SLLV), 104 to 124 (LGLT…SLGI), 151 to 171 (YIAA…GVFA), 203 to 223 (GIFY…LCVC), 239 to 259 (VAIG…SPLA), and 286 to 306 (YYFW…LFLY).

Belongs to the MIP/aquaporin (TC 1.A.8) family.

The protein resides in the membrane. It catalyses the reaction glycerol(in) = glycerol(out). The enzyme catalyses H2O(in) = H2O(out). The catalysed reaction is urea(in) = urea(out). Its function is as follows. Mediates water and glycerol transport across cell membranes. Permeable to urea. Permeable to methylamine/methylammonium. Permeable to dihydroxyacetone. This is Aquaglyceroporin-2 from Trypanosoma brucei brucei.